The chain runs to 94 residues: Integration host factor subunit beta (94 aa).

It belongs to the bacterial histone-like protein family. As to quaternary structure, heterodimer of an alpha and a beta chain.

This protein is one of the two subunits of integration host factor, a specific DNA-binding protein that functions in genetic recombination as well as in transcriptional and translational control. The protein is Integration host factor subunit beta of Azorhizobium caulinodans (strain ATCC 43989 / DSM 5975 / JCM 20966 / LMG 6465 / NBRC 14845 / NCIMB 13405 / ORS 571).